The primary structure comprises 150 residues: Probable deoxyuridine 5'-triphosphate nucleotidohydrolase (150 aa).

It belongs to the dCTP deaminase family. Archaeal dUTPase subfamily.

It carries out the reaction dUTP + H2O = dUMP + diphosphate + H(+). Its pathway is pyrimidine metabolism; dUMP biosynthesis; dUMP from dCTP (dUTP route): step 2/2. In terms of biological role, this enzyme is involved in nucleotide metabolism: it produces dUMP, the immediate precursor of thymidine nucleotides and it decreases the intracellular concentration of dUTP so that uracil cannot be incorporated into DNA. This Methanothermobacter thermautotrophicus (strain ATCC 29096 / DSM 1053 / JCM 10044 / NBRC 100330 / Delta H) (Methanobacterium thermoautotrophicum) protein is Probable deoxyuridine 5'-triphosphate nucleotidohydrolase.